Consider the following 258-residue polypeptide: Deoxyribose-phosphate aldolase (258 aa).

Asp-102 serves as the catalytic Proton donor/acceptor. Catalysis depends on Lys-165, which acts as the Schiff-base intermediate with acetaldehyde. Residue Lys-199 is the Proton donor/acceptor of the active site.

This sequence belongs to the DeoC/FbaB aldolase family. DeoC type 2 subfamily.

It localises to the cytoplasm. It catalyses the reaction 2-deoxy-D-ribose 5-phosphate = D-glyceraldehyde 3-phosphate + acetaldehyde. The protein operates within carbohydrate degradation; 2-deoxy-D-ribose 1-phosphate degradation; D-glyceraldehyde 3-phosphate and acetaldehyde from 2-deoxy-alpha-D-ribose 1-phosphate: step 2/2. Its function is as follows. Catalyzes a reversible aldol reaction between acetaldehyde and D-glyceraldehyde 3-phosphate to generate 2-deoxy-D-ribose 5-phosphate. This Vibrio vulnificus (strain CMCP6) protein is Deoxyribose-phosphate aldolase.